We begin with the raw amino-acid sequence, 262 residues long: Snake venom serine proteinase 9 (262 aa).

A signal peptide spans 1–18; that stretch reads MVLIRVLANLLILQLSYA. Positions 19–24 are excised as a propeptide; it reads QKSSEL. The Peptidase S1 domain maps to 25 to 253; that stretch reads VIGGDECNID…HLDWIQSIIA (229 aa). 5 disulfides stabilise this stretch: cysteine 31–cysteine 165, cysteine 52–cysteine 68, cysteine 144–cysteine 214, cysteine 176–cysteine 193, and cysteine 204–cysteine 229. Histidine 67 serves as the catalytic Charge relay system. A glycan (N-linked (GlcNAc...) asparagine) is linked at asparagine 105. Aspartate 112 (charge relay system) is an active-site residue. Serine 208 functions as the Charge relay system in the catalytic mechanism.

This sequence belongs to the peptidase S1 family. Snake venom subfamily. Monomer. As to expression, expressed by the venom gland.

It is found in the secreted. Functionally, snake venom serine protease that may act in the hemostasis system of the prey. This Crotalus adamanteus (Eastern diamondback rattlesnake) protein is Snake venom serine proteinase 9.